The following is a 209-amino-acid chain: Ribosomal RNA large subunit methyltransferase E (209 aa).

Residues glycine 63, tryptophan 65, aspartate 83, aspartate 99, and aspartate 124 each coordinate S-adenosyl-L-methionine. The active-site Proton acceptor is the lysine 164.

The protein belongs to the class I-like SAM-binding methyltransferase superfamily. RNA methyltransferase RlmE family.

The protein localises to the cytoplasm. It carries out the reaction uridine(2552) in 23S rRNA + S-adenosyl-L-methionine = 2'-O-methyluridine(2552) in 23S rRNA + S-adenosyl-L-homocysteine + H(+). Its function is as follows. Specifically methylates the uridine in position 2552 of 23S rRNA at the 2'-O position of the ribose in the fully assembled 50S ribosomal subunit. The polypeptide is Ribosomal RNA large subunit methyltransferase E (Photorhabdus laumondii subsp. laumondii (strain DSM 15139 / CIP 105565 / TT01) (Photorhabdus luminescens subsp. laumondii)).